The primary structure comprises 1206 residues: MWAVARLGLRLRASWWEAQAGRLMPGGGGGSAAAAAMQEEQGEQEGPTGRDLSNALYALGEGVVANTLWALQQLLAPARAEQEHPQEGRPQQQEQGGEARQEQQGQQAPRQLWWALLERSRQHMEATCVQQQGQGRGQAADGKSTSSRGAAGGGVAKAVARGPRGAGTARGPLGTAAAPLRRVLWGAGRQDVCVYLSGLRRLHMPPPPSLAVPLMQRLEQQLLAAEGEAQAEAAVPARAPPSTASTAAPPSARCLVYLAVELSHMGPLGPLGPLGPLGKAQAGGQQVPVQVQVPGVEADVGSLGARECADLCVALVRLGVSLPRGAGSGKATMPHPHPSPHLRYDEQPQLSGADLGPSADMAPLPLDTGERALPEPSSHPPVARQQLGEQPGEQPGGPHEDEEDWDPAFVADGYEAEAGELPKRPSASGGGMEGSFSLPQQLALAQSLHWLDQAAAHMMQTGAEDAASVDEEAEAPEADAVLAAALAAARDDTALYLFCSWAPSSLSSLSSLSATATATAAALRLRLTGAAHVVEGAALQAAAAALDAACWKQQGAGPGVVVGKDREVQAAAPAGPPGDLEAEQVVCAPCMCTGSIDTPDQPPAPNNLNNPHPSAFHRYQDHGDRLQVDVVRLTDELETQKLNLRDINEFLTNELKSKVAELNGLMDEVKKSHEASLARLRGDKDRELERLEGVVREHERKARITQEFLDKKEALEAEMQSLKETLARKTKDFEQQLTDIDRQHIQDREKWKREMAGRIKETKLQMMKLTDNQLEMTTKRTIMENEQMSIELSYQSRQTEKLLNKNNKLMEENAELRRQLELSKQTEEELARRNNLYQKTIKTLLSKLQDQGYQAAESEEVLGALDGRLGDLAAHLHLAQLQLEEKSAEADALRERLESKTAEAAALTSGYDDTARFLLACMADVRDKVVTVVRTTTTNNTSSDERLPPLAGADAAGGSRSGSPTPPGASSSAAGGGDITVLPGRLDELSPEQRERVLGWLLERLHYATGLSHGPLSQSSPAPLSAGGMGSALAGEWGPGSPGGSRLGRLPTREQDGSAGGMGGPQGLGATSGAAAAAAGAGGGLDGVSSLGGLGYGLGYGGVGVSSSVMAGMSPGPGVPGYSVSTGDVMPGGGMLGGAGVIGGGTGGGAGGAVVDEALAKVLSEVRPWGKRSEQQPLTTTKHSGTFLRKGNGPSNNTGSRGSLKV.

Disordered regions lie at residues 26–52 (GGGG…GRDL), 79–109 (RAEQ…QQAP), 125–173 (EATC…RGPL), and 327–405 (GSGK…EEDW). Low complexity-rich tracts occupy residues 88-109 (GRPQ…QQAP), 156-173 (AKAV…RGPL), and 385-397 (QQLG…QPGG). Coiled-coil stretches lie at residues 634 to 732 (TDEL…KTKD), 799 to 833 (TEKL…LARR), and 876 to 903 (LHLA…KTAE). Disordered regions lie at residues 936 to 990 (TTTN…DELS), 1011 to 1072 (LSHG…GATS), and 1168 to 1206 (PWGK…SLKV). Low complexity-rich tracts occupy residues 951 to 973 (AGAD…SSSA) and 1014 to 1035 (GPLS…ALAG). Gly residues-rich tracts occupy residues 1037-1046 (WGPGSPGGSR) and 1058-1067 (SAGGMGGPQG). Polar residues-rich tracts occupy residues 1175-1184 (QQPLTTTKHS) and 1193-1206 (GPSN…SLKV).

It belongs to the CFAP157 family.

The protein resides in the cell projection. It localises to the cilium. The protein localises to the flagellum. This Chlamydomonas reinhardtii (Chlamydomonas smithii) protein is Cilia- and flagella-associated protein 157.